Here is a 737-residue protein sequence, read N- to C-terminus: Relaxin receptor 2 (737 aa).

The Extracellular segment spans residues 1–399; that stretch reads MWLLLHVILL…SSSEDLLANG (399 aa). Residues 27–64 enclose the LDL-receptor class A domain; sequence LCPKGYFPCGNLTKCLPRAFHCDGVDDCGNGADEDNCG. 3 disulfide bridges follow: Cys-28–Cys-41, Cys-35–Cys-54, and Cys-48–Cys-63. Asn-37 carries an N-linked (GlcNAc...) asparagine glycan. Asn-121 carries N-linked (GlcNAc...) asparagine glycosylation. LRR repeat units lie at residues 121–142, 145–166, 169–190, 193–214, 217–238, 241–262, 265–286, 289–310, 313–334, and 337–358; these read NVTL…VFSR, ELRK…AFLG, NLQI…IFKD, QLAW…SFMG, SLFF…LCAQ, QLNW…TFLT, SLTV…TFSS, NLGE…LFSD, LLQK…QFGS, and QLQS…MFQP. Asn-257 carries an N-linked (GlcNAc...) asparagine glycan. Residues Asn-318, Asn-350, and Asn-361 are each glycosylated (N-linked (GlcNAc...) asparagine). A helical membrane pass occupies residues 400–420; sequence ILRVSVWVIAFITCVGNFLVI. Topologically, residues 421–438 are cytoplasmic; sequence AVRSLIKAENTTHAMSIK. Residues 439-459 form a helical membrane-spanning segment; the sequence is ILCCADCLMGVYLFSVGVFDI. Over 460 to 478 the chain is Extracellular; the sequence is KYRGQYQKYALLWMESVPC. An intrachain disulfide couples Cys-478 to Cys-556. The chain crosses the membrane as a helical span at residues 479–501; that stretch reads RLLGFLATLSTEVSVLLLTFLTL. Topologically, residues 502 to 520 are cytoplasmic; the sequence is EKFLVIVFPFSNLRLGKRQ. Residues 521–541 traverse the membrane as a helical segment; it reads TAVALASIWVVGFLIAAVPFT. Topologically, residues 542 to 575 are extracellular; sequence REDYFGNFYGKNGVCFPLHYDQAEDFGSRGYSLG. The chain crosses the membrane as a helical span at residues 576 to 596; the sequence is IFLGVNLLAFLVIVISYVTMF. Residues 597–622 are Cytoplasmic-facing; it reads CSIHKTALQTAEVRSHIGKEVAVANR. The helical transmembrane segment at 623–643 threads the bilayer; the sequence is FFFIVFSDAICWIPVFVVKIL. The Extracellular segment spans residues 644–653; sequence SLLQVEIPGT. Residues 654–674 form a helical membrane-spanning segment; sequence ITSWIVVFFLPVNSALNPILY. The Cytoplasmic portion of the chain corresponds to 675-737; the sequence is TLTTSFFKDK…GDSIMKPVSP (63 aa).

It belongs to the G-protein coupled receptor 1 family. As to expression, expressed in embryonic and adult gonads of males and females, as well in male gubernarculum. Expressed also in brain. Not detected in kidney, spleen and heart.

It localises to the cell membrane. Functionally, receptor for relaxin. The activity of this receptor is mediated by G proteins leading to stimulation of adenylate cyclase and an increase of cAMP. May also be a receptor for Leydig insulin-like peptide (INSL3). The chain is Relaxin receptor 2 (Rxfp2) from Mus musculus (Mouse).